The following is a 74-amino-acid chain: Large ribosomal subunit protein bL31 (74 aa).

4 residues coordinate Zn(2+): cysteine 16, cysteine 18, cysteine 38, and cysteine 41.

It belongs to the bacterial ribosomal protein bL31 family. Type A subfamily. In terms of assembly, part of the 50S ribosomal subunit. Requires Zn(2+) as cofactor.

Its function is as follows. Binds the 23S rRNA. The chain is Large ribosomal subunit protein bL31 from Acinetobacter baumannii (strain AB307-0294).